Here is a 404-residue protein sequence, read N- to C-terminus: Dual-specificity RNA methyltransferase RlmN (404 aa).

E119 (proton acceptor) is an active-site residue. Positions 126–358 constitute a Radical SAM core domain; the sequence is VGRAGALCVS…NKAGYSSPIR (233 aa). C133 and C369 are oxidised to a cystine. Residues C140, C144, and C147 each coordinate [4Fe-4S] cluster. S-adenosyl-L-methionine-binding positions include 195-196, S227, 249-251, and N326; these read GE and SLH. Residue C369 is the S-methylcysteine intermediate of the active site.

It belongs to the radical SAM superfamily. RlmN family. The cofactor is [4Fe-4S] cluster.

The protein resides in the cytoplasm. It carries out the reaction adenosine(2503) in 23S rRNA + 2 reduced [2Fe-2S]-[ferredoxin] + 2 S-adenosyl-L-methionine = 2-methyladenosine(2503) in 23S rRNA + 5'-deoxyadenosine + L-methionine + 2 oxidized [2Fe-2S]-[ferredoxin] + S-adenosyl-L-homocysteine. It catalyses the reaction adenosine(37) in tRNA + 2 reduced [2Fe-2S]-[ferredoxin] + 2 S-adenosyl-L-methionine = 2-methyladenosine(37) in tRNA + 5'-deoxyadenosine + L-methionine + 2 oxidized [2Fe-2S]-[ferredoxin] + S-adenosyl-L-homocysteine. Functionally, specifically methylates position 2 of adenine 2503 in 23S rRNA and position 2 of adenine 37 in tRNAs. m2A2503 modification seems to play a crucial role in the proofreading step occurring at the peptidyl transferase center and thus would serve to optimize ribosomal fidelity. The protein is Dual-specificity RNA methyltransferase RlmN of Caulobacter sp. (strain K31).